Here is a 205-residue protein sequence, read N- to C-terminus: Outer-membrane lipoprotein carrier protein (205 aa).

Residues 1-19 (MKKIIICFIFVFSINVSFA) form the signal peptide.

Belongs to the LolA family. In terms of assembly, monomer.

Its subcellular location is the periplasm. Participates in the translocation of lipoproteins from the inner membrane to the outer membrane. Only forms a complex with a lipoprotein if the residue after the N-terminal Cys is not an aspartate (The Asp acts as a targeting signal to indicate that the lipoprotein should stay in the inner membrane). The protein is Outer-membrane lipoprotein carrier protein of Francisella tularensis subsp. tularensis (strain FSC 198).